Here is a 244-residue protein sequence, read N- to C-terminus: ATP synthase subunit a, chloroplastic (244 aa).

5 consecutive transmembrane segments (helical) span residues 35 to 55 (QVLITSWVVIAILLGSAVIAV), 92 to 112 (VPFIGTMFLFIFVSNWSGALL), 131 to 151 (INTTVALALLTSVAYFYAGLS), 196 to 216 (LVVVVLVSLVPSVVPIPVMFL), and 217 to 237 (GLFISGIQALIFATLAAAYIG).

Belongs to the ATPase A chain family. F-type ATPases have 2 components, CF(1) - the catalytic core - and CF(0) - the membrane proton channel. CF(1) has five subunits: alpha(3), beta(3), gamma(1), delta(1), epsilon(1). CF(0) has four main subunits: a, b, b' and c.

It is found in the plastid. Its subcellular location is the chloroplast thylakoid membrane. In terms of biological role, key component of the proton channel; it plays a direct role in the translocation of protons across the membrane. The polypeptide is ATP synthase subunit a, chloroplastic (Gossypium barbadense (Sea Island cotton)).